A 459-amino-acid chain; its full sequence is tRNA modification GTPase MnmE (459 aa).

(6S)-5-formyl-5,6,7,8-tetrahydrofolate is bound by residues Arg29, Glu86, and Lys125. A TrmE-type G domain is found at 221-382 (GMNVVIAGRP…LTEHLKAVMG (162 aa)). Asn231 provides a ligand contact to K(+). GTP is bound by residues 231–236 (NAGKSS), 250–256 (TNIEGTT), and 275–278 (DTAG). Ser235 serves as a coordination point for Mg(2+). Residues Thr250, Ile252, and Thr255 each contribute to the K(+) site. Thr256 serves as a coordination point for Mg(2+). Lys459 contacts (6S)-5-formyl-5,6,7,8-tetrahydrofolate.

This sequence belongs to the TRAFAC class TrmE-Era-EngA-EngB-Septin-like GTPase superfamily. TrmE GTPase family. Homodimer. Heterotetramer of two MnmE and two MnmG subunits. K(+) is required as a cofactor.

The protein localises to the cytoplasm. Exhibits a very high intrinsic GTPase hydrolysis rate. Involved in the addition of a carboxymethylaminomethyl (cmnm) group at the wobble position (U34) of certain tRNAs, forming tRNA-cmnm(5)s(2)U34. This Marinomonas sp. (strain MWYL1) protein is tRNA modification GTPase MnmE.